A 367-amino-acid chain; its full sequence is 1-deoxy-D-xylulose 5-phosphate reductoisomerase (367 aa).

NADPH is bound by residues Thr10, Gly11, Ser12, Ile13, Gly34, Lys35, Asn36, and Asn112. Lys113 serves as a coordination point for 1-deoxy-D-xylulose 5-phosphate. Glu114 serves as a coordination point for NADPH. Residue Asp138 participates in Mn(2+) binding. 1-deoxy-D-xylulose 5-phosphate is bound by residues Ser139, Glu140, Ser164, and His186. Glu140 is a binding site for Mn(2+). Position 192 (Gly192) interacts with NADPH. Ser199, Asn204, Lys205, and Glu208 together coordinate 1-deoxy-D-xylulose 5-phosphate. Glu208 provides a ligand contact to Mn(2+).

Belongs to the DXR family. The cofactor is Mg(2+). It depends on Mn(2+) as a cofactor.

It carries out the reaction 2-C-methyl-D-erythritol 4-phosphate + NADP(+) = 1-deoxy-D-xylulose 5-phosphate + NADPH + H(+). It participates in isoprenoid biosynthesis; isopentenyl diphosphate biosynthesis via DXP pathway; isopentenyl diphosphate from 1-deoxy-D-xylulose 5-phosphate: step 1/6. Functionally, catalyzes the NADPH-dependent rearrangement and reduction of 1-deoxy-D-xylulose-5-phosphate (DXP) to 2-C-methyl-D-erythritol 4-phosphate (MEP). This chain is 1-deoxy-D-xylulose 5-phosphate reductoisomerase, found in Thermus thermophilus (strain ATCC BAA-163 / DSM 7039 / HB27).